A 443-amino-acid chain; its full sequence is 2-hydroxyethylphosphonate dioxygenase (443 aa).

In terms of domain architecture, HTH cro/C1-type 1 spans L8–L63. Substrate is bound at residue K16. Positions A19–G38 form a DNA-binding region, H-T-H motif. Substrate is bound by residues Y98 and N126. Position 129 (H129) interacts with Fe cation. Substrate-binding residues include E176, H182, and S196. H182 serves as a coordination point for Fe cation. The region spanning V234 to L290 is the HTH cro/C1-type 2 domain. The segment at residues T245–R265 is a DNA-binding region (H-T-H motif).

This sequence belongs to the non-heme iron-dependent dioxygenase family. In terms of assembly, homodimer. Requires Fe(2+) as cofactor.

The enzyme catalyses 2-hydroxyethylphosphonate + O2 = hydroxymethylphosphonate + formate + H(+). It functions in the pathway secondary metabolite biosynthesis; bialaphos biosynthesis. In terms of biological role, non-heme-dependent dioxygenase that catalyzes the conversion of 2-hydroxyethylphosphonate (HEP) to hydroxymethylphosphonate (HMP) in the biosynthesis of phosphinothricin tripeptide (PTT), also known as bialaphos (BA), a natural-product antibiotic and potent herbicide. PTT contains the unusual amino acid phosphinothricin attached to 2 alanine residues. Synthetic phosphinothricin (glufosinate) is a key component of commercial herbicides. This Streptomyces viridochromogenes (strain DSM 40736 / JCM 4977 / BCRC 1201 / Tue 494) protein is 2-hydroxyethylphosphonate dioxygenase (hepD).